Consider the following 212-residue polypeptide: Entry-fusion complex associated protein OPG083 (212 aa).

Residues 1–175 lie on the Virion surface side of the membrane; it reads MAETKEFKTL…IIENRLPYYD (175 aa). Intrachain disulfides connect Cys-33–Cys-55, Cys-47–Cys-127, and Cys-107–Cys-149. Residues 176–196 form a helical membrane-spanning segment; sequence PWFLVGVAIILVIFTVAICSI. Over 197–212 the chain is Intravirion; sequence RRNLALKYRYGTFLYV.

The protein belongs to the orthopoxvirus OPG053 family. In terms of assembly, component of the entry fusion complex (EFC) composed of OPG053/F9, OPG076/O3, OPG086/G3, OPG094/G9, OPG095/L1, OPG099/L5, OPG107/H2, OPG143/A16, OPG104/J5, OPG147/A21 and OPG155/A28. Except for OPG095/L1 and OPG052/F9, each of the EFC proteins is required for assembly or stability of the complex. Post-translationally, disulfid bonds are oxidized in the cytoplasm by OPG088 protein. In terms of processing, unglycosylated because produced in viral factories instead of the classic ER -Golgi route.

The protein resides in the virion membrane. Its function is as follows. Component of the entry fusion complex (EFC), which consists of 11 proteins. During cell infection, this complex mediates entry of the virion core into the host cytoplasm by a two-step mechanism consisting of lipid mixing of the viral and cellular membranes and subsequent pore formation. This Vaccinia virus (strain Western Reserve) (VACV) protein is Entry-fusion complex associated protein OPG083 (OPG053).